Reading from the N-terminus, the 341-residue chain is HTH-type transcriptional repressor PurR (341 aa).

The region spanning Ala2–Val56 is the HTH lacI-type domain. The H-T-H motif DNA-binding region spans Ile4–Asn23. The DNA-binding element occupies Ser48–Val56. The hypoxanthine site is built by Tyr73, Arg190, Thr192, Phe221, and Asp275.

As to quaternary structure, homodimer.

It participates in purine metabolism; purine nucleotide biosynthesis [regulation]. Its function is as follows. Is the main repressor of the genes involved in the de novo synthesis of purine nucleotides, regulating purB, purC, purEK, purF, purHD, purL, purMN and guaBA expression. PurR is allosterically activated to bind its cognate DNA by binding the purine corepressors, hypoxanthine or guanine, thereby effecting transcription repression. The sequence is that of HTH-type transcriptional repressor PurR from Shigella dysenteriae serotype 1 (strain Sd197).